A 491-amino-acid chain; its full sequence is Glutamyl-tRNA(Gln) amidotransferase subunit A (491 aa).

Residues Lys78 and Ser158 each act as charge relay system in the active site. The active-site Acyl-ester intermediate is the Ser182.

The protein belongs to the amidase family. GatA subfamily. Heterotrimer of A, B and C subunits.

The catalysed reaction is L-glutamyl-tRNA(Gln) + L-glutamine + ATP + H2O = L-glutaminyl-tRNA(Gln) + L-glutamate + ADP + phosphate + H(+). Allows the formation of correctly charged Gln-tRNA(Gln) through the transamidation of misacylated Glu-tRNA(Gln) in organisms which lack glutaminyl-tRNA synthetase. The reaction takes place in the presence of glutamine and ATP through an activated gamma-phospho-Glu-tRNA(Gln). This Nitrobacter winogradskyi (strain ATCC 25391 / DSM 10237 / CIP 104748 / NCIMB 11846 / Nb-255) protein is Glutamyl-tRNA(Gln) amidotransferase subunit A.